The chain runs to 193 residues: Probable gluconokinase (193 aa).

21–28 (GPAGSGKT) provides a ligand contact to ATP.

This sequence belongs to the gluconokinase GntK/GntV family.

It catalyses the reaction D-gluconate + ATP = 6-phospho-D-gluconate + ADP + H(+). The protein operates within carbohydrate acid metabolism; D-gluconate degradation. This Schizosaccharomyces pombe (strain 972 / ATCC 24843) (Fission yeast) protein is Probable gluconokinase.